A 109-amino-acid chain; its full sequence is Large ribosomal subunit protein uL22 (109 aa).

It belongs to the universal ribosomal protein uL22 family. As to quaternary structure, part of the 50S ribosomal subunit.

Its function is as follows. This protein binds specifically to 23S rRNA; its binding is stimulated by other ribosomal proteins, e.g. L4, L17, and L20. It is important during the early stages of 50S assembly. It makes multiple contacts with different domains of the 23S rRNA in the assembled 50S subunit and ribosome. In terms of biological role, the globular domain of the protein is located near the polypeptide exit tunnel on the outside of the subunit, while an extended beta-hairpin is found that lines the wall of the exit tunnel in the center of the 70S ribosome. The polypeptide is Large ribosomal subunit protein uL22 (Psychrobacter cryohalolentis (strain ATCC BAA-1226 / DSM 17306 / VKM B-2378 / K5)).